A 520-amino-acid chain; its full sequence is Tubby-related protein 2 (520 aa).

Serine 135 and serine 190 each carry phosphoserine. The tract at residues 141–236 (EVSVENGSVS…GTNSSAAHNE (96 aa)) is disordered. Residues 211–223 (QKEEDLEKKREAS) are compositionally biased toward basic and acidic residues. A compositionally biased stretch (polar residues) spans 224–233 (ESTGTNSSAA).

It belongs to the TUB family. Strongly expressed in testis. Also expressed in retina. Expressed in cancer cell lines.

Its subcellular location is the cytoplasm. It localises to the secreted. This Homo sapiens (Human) protein is Tubby-related protein 2 (TULP2).